The sequence spans 369 residues: MSSRGGKKKSTKTSRSAKAGVIFPVGRMLRYIKKGHPKYRIGVGAPVYMAAVLEYLTAEILELAGNAARDNKKGRVTPRHILLAVANDEELNQLLKGVTIASGGVLPNIHPELLAKKRGSKGKLEAIITPPPAKKAKSPSQKKPVAKKTGGKKGARKSKKKQGEVSKAASADSTTEGTPTDGFTVLSTKSLFLGQKLQVVQADIASIDSDAVVHPTNTDFYTGGEVGNTLEKKGGKEFVEAVLELRKKNGPLEVAGAAISAGHGLPAKFVIHCNSPVWGADKCEELLEKTVKNCLALADDRKLKSIAFPSIGSGRNGFPKQTAAQLILKAISSYFVSTMSSSIKTVYFMLFDSESIGIYVQEMAKLDAN.

In terms of domain architecture, Histone H2A spans 2-117 (SSRGGKKKST…NIHPELLAKK (116 aa)). An N6-lactoyllysine; alternate mark is found at Lys-7 and Lys-9. Position 18 is an N6-methyllysine (Lys-18). Lys-116 carries the N6-acetyllysine; alternate modification. Lys-116 is covalently cross-linked (Glycyl lysine isopeptide (Lys-Gly) (interchain with G-Cter in ubiquitin); alternate). Lys-117 is covalently cross-linked (Glycyl lysine isopeptide (Lys-Gly) (interchain with G-Cter in ubiquitin)). Lys-123 carries the N6-acetyllysine; alternate modification. Lys-123 is modified (N6,N6-dimethyllysine; alternate). A Glycyl lysine isopeptide (Lys-Gly) (interchain with G-Cter in SUMO2); alternate cross-link involves residue Lys-123. Positions 128 to 180 (ITPPPAKKAKSPSQKKPVAKKTGGKKGARKSKKKQGEVSKAASADSTTEGTPT) are disordered. Position 129 is a phosphothreonine (Thr-129). Residues 144-160 (PVAKKTGGKKGARKSKK) show a composition bias toward basic residues. Lys-167 participates in a covalent cross-link: Glycyl lysine isopeptide (Lys-Gly) (interchain with G-Cter in SUMO2). A phosphoserine mark is found at Ser-170 and Ser-173. A Phosphothreonine modification is found at Thr-178. The Macro domain occupies 184-367 (TVLSTKSLFL…IYVQEMAKLD (184 aa)). Lys-189 participates in a covalent cross-link: Glycyl lysine isopeptide (Lys-Gly) (interchain with G-Cter in SUMO2). A glycoprotein is bound by residues Asp-203, Ile-204, Val-226, Ser-275, Gly-312, Ser-313, Gly-314, and Asn-316. A Glycyl lysine isopeptide (Lys-Gly) (interchain with G-Cter in SUMO2) cross-link involves residue Lys-320.

This sequence belongs to the histone H2A family. In terms of assembly, the nucleosome is a histone octamer containing two molecules each of H2A, H2B, H3 and H4 assembled in one H3-H4 heterotetramer and two H2A-H2B heterodimers. Interacts with HDAC1 and HDAC2. Interacts with SPOP. Part of a complex consisting of MACROH2A1, CUL3 and SPOP. Interacts with PARP1. In terms of processing, monoubiquitinated at either Lys-116 or Lys-117. May also be polyubiquitinated. Ubiquitination is mediated by the CUL3/SPOP E3 complex and does not promote proteasomal degradation. Instead, it is required for enrichment in inactive X chromosome chromatin. In terms of tissue distribution, widely expressed, with high levels in testis. Present in liver, kidney and adrenal gland (at protein level). In the liver, present in hepatocytes and at a lesser extent in cells of the bile ducts. In the kidney, expressed in proximal and distal convoluted tubules and in straight proximal tubules. In the adrenal gland, present in inner cells of the cortex and medulla.

It is found in the nucleus. It localises to the chromosome. Variant histone H2A which replaces conventional H2A in a subset of nucleosomes where it represses transcription. Nucleosomes wrap and compact DNA into chromatin, limiting DNA accessibility to the cellular machineries which require DNA as a template. Histones thereby play a central role in transcription regulation, DNA repair, DNA replication and chromosomal stability. DNA accessibility is regulated via a complex set of post-translational modifications of histones, also called histone code, and nucleosome remodeling. Involved in stable X chromosome inactivation. Inhibits the binding of transcription factors, including NF-kappa-B, and interferes with the activity of remodeling SWI/SNF complexes. Inhibits histone acetylation by EP300 and recruits class I HDACs, which induces a hypoacetylated state of chromatin. Its function is as follows. Isoform that specifically binds poly-ADP-ribose and O-acetyl-ADP-ribose and plays a key role in NAD(+) metabolism. Able to bind to the ends of poly-ADP-ribose chains created by PARP1 and cap them. This prevents PARP1 from further addition of ADP-ribose and thus limits the consumption of nuclear NAD(+), allowing the cell to maintain proper NAD(+) levels in both the nucleus and the mitochondria to promote proper mitochondrial respiration. Increases the expression of genes involved in redox metabolism, including SOD3. Functionally, in contrast to isoform 1, does not bind poly-ADP-ribose. Represses SOD3 gene expression. The protein is Core histone macro-H2A.1 of Mus musculus (Mouse).